The chain runs to 306 residues: Anamorsin homolog (306 aa).

Residues 1-25 show a composition bias toward basic and acidic residues; the sequence is MVPPREDVTVRIVCERRRTAGKEAR. The interval 1-51 is disordered; it reads MVPPREDVTVRIVCERRRTAGKEARPPPSAKPTPGNTSSHPNAKETHRSNE. An N-terminal SAM-like domain region spans residues 59–190; that stretch reads KQSHRRSIMA…RRNNTTNSVA (132 aa). A linker region spans residues 191–218; the sequence is TLNFASNNNNGNDLLIDEDNLLTDASNL. Residues cysteine 236, cysteine 242, cysteine 245, and cysteine 247 each coordinate [2Fe-2S] cluster. The interval 236-247 is fe-S binding site A; it reads CSGRAPCDDCTC. A compositionally biased stretch (basic and acidic residues) spans 252-265; it reads GAKEGNSEQPKEIK. The interval 252 to 272 is disordered; sequence GAKEGNSEQPKEIKSSSCGKC. Residues cysteine 269, cysteine 272, cysteine 280, and cysteine 283 each coordinate [4Fe-4S] cluster. 2 consecutive short sequence motifs (cx2C motif) follow at residues 269–272 and 280–283; these read CGKC and CASC. The tract at residues 269–283 is fe-S binding site B; sequence CGKCSLGDAFRCASC.

The protein belongs to the anamorsin family. Monomer. [2Fe-2S] cluster is required as a cofactor. [4Fe-4S] cluster serves as cofactor.

Its subcellular location is the cytoplasm. It localises to the mitochondrion intermembrane space. In terms of biological role, component of the cytosolic iron-sulfur (Fe-S) protein assembly (CIA) machinery. Required for the maturation of extramitochondrial Fe-S proteins. Part of an electron transfer chain functioning in an early step of cytosolic Fe-S biogenesis, facilitating the de novo assembly of a [4Fe-4S] cluster on the cytosolic Fe-S scaffold complex. Electrons are transferred from NADPH via a FAD- and FMN-containing diflavin oxidoreductase. Together with the diflavin oxidoreductase, also required for the assembly of the diferric tyrosyl radical cofactor of ribonucleotide reductase (RNR), probably by providing electrons for reduction during radical cofactor maturation in the catalytic small subunit. In Phaeodactylum tricornutum (strain CCAP 1055/1), this protein is Anamorsin homolog.